Here is a 115-residue protein sequence, read N- to C-terminus: Transmembrane protein 218 (115 aa).

3 consecutive transmembrane segments (helical) span residues 5-25 (VLGV…VLLL), 38-58 (FSIV…LLFP), and 81-101 (YVLL…LLTH).

Belongs to the TMEM218 family. Interacts with TMEM67.

The protein resides in the membrane. Its subcellular location is the cell projection. The protein localises to the cilium. Functionally, may be involved in ciliary biogenesis or function. This Mus musculus (Mouse) protein is Transmembrane protein 218 (Tmem218).